Reading from the N-terminus, the 309-residue chain is D-allose kinase (309 aa).

Residues 10–17 (GVDMGATH) and 142–149 (GMGFAVWM) each bind ATP.

The protein belongs to the ROK (NagC/XylR) family.

The enzyme catalyses D-allose + ATP = D-allose 6-phosphate + ADP + H(+). It functions in the pathway carbohydrate degradation; D-allose degradation. Its function is as follows. Catalyzes the phosphorylation of D-allose to D-allose 6-phosphate. Also has low level glucokinase activity in vitro. This chain is D-allose kinase, found in Escherichia coli (strain K12).